Consider the following 360-residue polypeptide: Viral protein TPX (360 aa).

The disordered stretch occupies residues 269-289 (TVTPISSPSPTPTPTPTPTPT). A Thr-Pro(N) repeat occupies 270–291 (VTPISSPSPTPTPTPTPTPTPT). A compositionally biased stretch (pro residues) spans 275–289 (SPSPTPTPTPTPTPT). Positions 278–353 (PTPTPTPTPT…PTPTPTPTPT (76 aa)) are 3 Thr-Pro repeats regions and two near identical repeats. Positions 292-301 (YDITYVVFDV) form a repeat. A Thr-Pro(N) repeat occupies 302–322 (TPSPTPTPTLTSTPTPTPTPT). Positions 323–332 (YDITYVIFDV) form a repeat. The disordered stretch occupies residues 332-360 (VTPSPTPTPTPTPTPTPTPTPTSTTSSNI). The Thr-Pro(N) repeat unit spans residues 333 to 353 (TPSPTPTPTPTPTPTPTPTPT). A compositionally biased stretch (pro residues) spans 335-351 (SPTPTPTPTPTPTPTPT).

The polypeptide is Viral protein TPX (Thermoproteus tenax (TTV1)).